We begin with the raw amino-acid sequence, 464 residues long: FERM domain-containing protein 8 (464 aa).

Residue M1 is modified to N-acetylmethionine. The disordered stretch occupies residues 1 to 22; it reads MDGTEGSAGQPGPAERSHRSSV. At S24 the chain carries Phosphoserine. One can recognise an FERM domain in the interval 30–376; the sequence is ADVLVYLADD…YCIELSQAAE (347 aa). Residues 376-408 are disordered; that stretch reads EPAGPQDSATGSPSDPSSSLAPVQRPKLRRQGS. Phosphoserine is present on residues S383, S387, and S408. T419 is modified (phosphothreonine). Phosphoserine occurs at positions 439 and 446.

In terms of assembly, interacts with iRhom1/RHBDF1 and iRhom2/RHBDF2 (via cytoplasmic N-termini); this interaction leads to mutual protein stabilization. Interacts with ADAM17; this interaction is indirect and mediated by iRhom proteins. Interacts with LRP6; this interaction affects LRP6-binding to AXIN1. As to expression, widely expressed, with high expression in heart and spleen.

Its subcellular location is the cytoplasm. It is found in the cytosol. The protein localises to the cell membrane. Its function is as follows. Promotes the cell surface stability of iRhom1/RHBDF1 and iRhom2/RHBDF2 and prevents their degradation via the endolysosomal pathway. By acting on iRhoms, involved in ADAM17-mediated shedding of TNF, amphiregulin/AREG, HBEGF and TGFA from the cell surface. Negatively regulates Wnt signaling, possibly by antagonizing the recruitment of AXIN1 to LRP6. This chain is FERM domain-containing protein 8 (FRMD8), found in Homo sapiens (Human).